Here is a 444-residue protein sequence, read N- to C-terminus: Phosphatidate cytidylyltransferase 2 (444 aa).

Residues 1 to 38 show a composition bias toward basic and acidic residues; that stretch reads MTELRQRVVREDAPPEDKESESEAKLDGETASDSESRA. The segment at 1 to 48 is disordered; the sequence is MTELRQRVVREDAPPEDKESESEAKLDGETASDSESRAETAPLPTSVD. Serine 20 bears the Phosphoserine mark. Threonine 30 carries the post-translational modification Phosphothreonine. Residues serine 32, serine 34, and serine 36 each carry the phosphoserine modification. The residue at position 50 (threonine 50) is a Phosphothreonine. The next 6 helical transmembrane spans lie at 78–98, 129–149, 165–185, 212–232, 261–281, and 339–359; these read MIAFFFIIIYLGPMVLMMIVM, WYFLLCVNYFFYGETVTDYFF, HRFISFALYLTGFCMFVLSLV, LVIHNLFEGMIWFIVPISCVI, GFIGGFFATVVFGLLLSYVMS, and IALSTFASLIGPFGGFFASGF.

Belongs to the CDS family. Homodimer. In terms of tissue distribution, ubiquitous. Expressed in the ganglion cell layer and inner nuclear layer of the retina.

It is found in the endoplasmic reticulum membrane. It carries out the reaction a 1,2-diacyl-sn-glycero-3-phosphate + CTP + H(+) = a CDP-1,2-diacyl-sn-glycerol + diphosphate. It catalyses the reaction 1-octadecanoyl-2-(5Z,8Z,11Z,14Z-eicosatetraenoyl)-sn-glycero-3-phosphate + CTP + H(+) = 1-octadecanoyl-2-(5Z,8Z,11Z,14Z-eicosatetraenoyl)-sn-glycero-3-cytidine-5'-diphosphate + diphosphate. The catalysed reaction is 1-octadecanoyl-2-(9Z,12Z-octadecadienoyl)-sn-glycero-3-phosphate + CTP + H(+) = 1-octadecanoyl-2-(9Z,12Z-octadecadienoyl)-sn-glycero-3-cytidine-5'-diphosphate + diphosphate. The enzyme catalyses 1-hexadecanoyl-2-(5Z,8Z,11Z,14Z-eicosatetraenoyl)-sn-glycero-3-phosphate + CTP + H(+) = 1-hexadecanoyl-2-(5Z,8Z,11Z,14Z-eicosatetraenoyl)-sn-glycero-3-cytidine-5'-diphosphate + diphosphate. It carries out the reaction 1,2-di-(5Z,8Z,11Z,14Z)-eicosatetraenoyl-sn-glycero-3-phosphate + CTP + H(+) = 1,2-di-(5Z,8Z,11Z,14Z-eicosatetraenoyl)-sn-glycero-3-cytidine-5'-diphosphate + diphosphate. It catalyses the reaction 1-octadecanoyl-2-(9Z-octadecenoyl)-sn-glycero-3-phosphate + CTP + H(+) = 1-octadecanoyl-2-(9Z-octadecenoyl)-sn-glycero-3-cytidine-5'-diphosphate + diphosphate. The catalysed reaction is 1-octadecanoyl-2-(4Z,7Z,10Z,13Z,16Z,19Z-docosahexaenoyl)-sn-glycero-3-phosphate + CTP + H(+) = 1-octadecanoyl-2-(4Z,7Z,10Z,13Z,16Z,19Z-docosahexaenoyl)-sn-glycero-3-cytidine-5'-diphosphate + diphosphate. The enzyme catalyses 1,2-di-(9Z,12Z-octadecadienoyl)-sn-glycero-3-phosphate + CTP + H(+) = 1,2-di-(9Z,12Z-octadecadienoyl)-sn-glycero-3-cytidine-5'-diphosphate + diphosphate. It carries out the reaction 1,2-di-(9Z-octadecenoyl)-sn-glycero-3-phosphate + CTP + H(+) = 1,2-di-(9Z-octadecenoyl)-sn-glycero-3-cytidine-5'-diphosphate + diphosphate. It functions in the pathway phospholipid metabolism; CDP-diacylglycerol biosynthesis; CDP-diacylglycerol from sn-glycerol 3-phosphate: step 3/3. Its function is as follows. Catalyzes the conversion of phosphatidic acid (PA) to CDP-diacylglycerol (CDP-DAG), an essential intermediate in the synthesis of phosphatidylglycerol, cardiolipin and phosphatidylinositol. Exhibits specificity for the nature of the acyl chains at the sn-1 and sn-2 positions in the substrate, PA and the preferred acyl chain composition is 1-stearoyl-2-arachidonoyl-sn-phosphatidic acid. Plays an important role in regulating the growth and maturation of lipid droplets which are storage organelles at the center of lipid and energy homeostasis. The chain is Phosphatidate cytidylyltransferase 2 from Mus musculus (Mouse).